Here is a 552-residue protein sequence, read N- to C-terminus: MFQGLSPLARDARAWPFEQARVLLARILRLRLSDAERDLASVLIHSGKADEAVRTFPALAKPVILETGYGPSGLPHLGTFGEVARTTMVRNAFRALTDDAIKTRLIAFSDDMDGLRKVPDNIENKQPLIEDLGKPLTVVRDPFGTHDSFGAHNNARLRAFLDGFGFEYEFVSSTDCYKGGLFDETLLTALARFDAIQKVMLPTLGEERRASYSPFLPISPSTGKVLQVPTLERDVDKGTIVFQDEDGSKVEVPVTGGHVKMQWKPDWAMRWTALGVDYEMSGKDLIDSVKASGQICKALGGVPPEGFNYELFLDENSQKISKSKGNGLSMEDWLRYGAPESLSYYMFQSPKSAKKLYFDVIPKATDEYLQQLDAYPKQEPAKQLDNPVWHVHSGRPPQYGSPVSFSLMLNLVSAANASDKEILWGFLSRYIPGATPQSQPLLDRLAGYAINYYEDFVKPSKVFRAPDDKERAAMLDLLGRLKALPSDCQDAELIQNEVFAVGKDHGFDPLRAWFQALYEVLLGQSQGPRFGSFAAIFGLDRTTALIAEKLAV.

Positions Pro-71–Thr-79 match the 'HIGH' region motif. A 'KMSKS' region motif is present at residues Lys-319 to Ser-323. Position 322 (Lys-322) interacts with ATP.

Belongs to the class-I aminoacyl-tRNA synthetase family.

The protein localises to the cytoplasm. It catalyses the reaction tRNA(Lys) + L-lysine + ATP = L-lysyl-tRNA(Lys) + AMP + diphosphate. The protein is Lysine--tRNA ligase of Caulobacter sp. (strain K31).